The chain runs to 396 residues: Tryptophan synthase beta chain (396 aa).

K88 carries the post-translational modification N6-(pyridoxal phosphate)lysine.

It belongs to the TrpB family. In terms of assembly, tetramer of two alpha and two beta chains. It depends on pyridoxal 5'-phosphate as a cofactor.

It catalyses the reaction (1S,2R)-1-C-(indol-3-yl)glycerol 3-phosphate + L-serine = D-glyceraldehyde 3-phosphate + L-tryptophan + H2O. It participates in amino-acid biosynthesis; L-tryptophan biosynthesis; L-tryptophan from chorismate: step 5/5. Its function is as follows. The beta subunit is responsible for the synthesis of L-tryptophan from indole and L-serine. The chain is Tryptophan synthase beta chain from Shewanella sp. (strain W3-18-1).